The sequence spans 1065 residues: Pumilio domain-containing protein P35G2.14 (1065 aa).

Disordered stretches follow at residues 1-78, 130-265, and 422-573; these read MHQD…SLRS, ITSK…PWSP, and TTGF…NTNS. Residues 16-44 show a composition bias toward polar residues; the sequence is RNTISKPSNNNPPLDMSSLNNDFGQQLDS. Positions 59 to 77 are enriched in low complexity; it reads NPSSNFNDSNRSNISSSLR. 2 stretches are compositionally biased toward polar residues: residues 134-151 and 169-189; these read LQNNSNLSVTSSANRGRT and SSVSSGKQHLSSLSLHTHFNP. 2 stretches are compositionally biased toward low complexity: residues 190 to 224 and 236 to 246; these read SSSSTVSSDSLESSQQKAPSSSSTATPASAASEII and SASNAANSGSN. 2 stretches are compositionally biased toward polar residues: residues 247–262 and 434–455; these read TIRARQTTRTRSNTLP and GLNTSLFNTSSGGSLKSPTFEV. Thr260 bears the Phosphothreonine mark. Low complexity predominate over residues 470–483; the sequence is PLGSLSSRPKPSSS. Composition is skewed to polar residues over residues 495–522 and 529–551; these read LKTSNPYMPSPSLLSGSLANSSEHSSSP and IHNQPVSSSKSTASLNTNNNGLR. Phosphoserine occurs at positions 506, 511, and 515. Thr554 carries the post-translational modification Phosphothreonine. The segment covering 559-573 has biased composition (low complexity); it reads NISTRSSSESNNTNS. Residues 592-666 enclose the RRM domain; sequence HALWVGNLPS…DPVCISFAKV (75 aa). The 354-residue stretch at 712-1065 folds into the PUM-HD domain; that stretch reads DLSKIYQILN…ELKKLAEVCA (354 aa). Pumilio repeat units lie at residues 771–808, 809–844, 846–884, 886–917, 919–954, and 956–993; these read AINWLDEVSDLSSDHLGNTVVQKLFDYCSDPVKEMMLE, RIAPHLAQIGIHKNGTWAAQKIVDVASTEAQMRLIA, HLQPYIPLLFADQFGNYVVQTCLKFGAPMNDFVFEAILN, FWVIAQSRYGSRAVRACLESPDVTEEQRVLVA, AITVYSVHLAMNGNGTLLLTYLVENMNYPHIPILLT, and RFVQDIVRVCTHRLAYNSLLKIISISQGDTACGDLVVD.

It localises to the cytoplasm. The protein is Pumilio domain-containing protein P35G2.14 of Schizosaccharomyces pombe (strain 972 / ATCC 24843) (Fission yeast).